The sequence spans 37 residues: Large ribosomal subunit protein bL36c (37 aa).

Belongs to the bacterial ribosomal protein bL36 family.

It is found in the plastid. Its subcellular location is the chloroplast. The polypeptide is Large ribosomal subunit protein bL36c (Piper cenocladum (Ant piper)).